Consider the following 376-residue polypeptide: Succinyl-diaminopimelate desuccinylase (376 aa).

His67 lines the Zn(2+) pocket. The active site involves Asp69. Asp100 provides a ligand contact to Zn(2+). Glu134 serves as the catalytic Proton acceptor. The Zn(2+) site is built by Glu135, Glu163, and His349.

Belongs to the peptidase M20A family. DapE subfamily. Homodimer. Zn(2+) is required as a cofactor. The cofactor is Co(2+).

The enzyme catalyses N-succinyl-(2S,6S)-2,6-diaminopimelate + H2O = (2S,6S)-2,6-diaminopimelate + succinate. The protein operates within amino-acid biosynthesis; L-lysine biosynthesis via DAP pathway; LL-2,6-diaminopimelate from (S)-tetrahydrodipicolinate (succinylase route): step 3/3. Its function is as follows. Catalyzes the hydrolysis of N-succinyl-L,L-diaminopimelic acid (SDAP), forming succinate and LL-2,6-diaminopimelate (DAP), an intermediate involved in the bacterial biosynthesis of lysine and meso-diaminopimelic acid, an essential component of bacterial cell walls. This Shewanella denitrificans (strain OS217 / ATCC BAA-1090 / DSM 15013) protein is Succinyl-diaminopimelate desuccinylase.